The chain runs to 103 residues: Small ribosomal subunit protein uS10 (103 aa).

This sequence belongs to the universal ribosomal protein uS10 family. Part of the 30S ribosomal subunit.

Involved in the binding of tRNA to the ribosomes. This is Small ribosomal subunit protein uS10 from Idiomarina loihiensis (strain ATCC BAA-735 / DSM 15497 / L2-TR).